We begin with the raw amino-acid sequence, 187 residues long: MISSNDFRTGTTIEIDGAVWRVVEFLHVKPGKGSAFVRSKLKAVKTGNVVEKTFRAGEMLPQALLEKASLQHTYMEGEDYVFMDMSTYEETRLSADQIGESRKYLKEGMEVNVVSWNGSPLEVELPNSVVLEITETDPGVKGDTATGGTKPAILETGAQVMVPLFLSIGEKIKVDTRSDSYLGRENG.

This sequence belongs to the elongation factor P family.

The protein resides in the cytoplasm. It participates in protein biosynthesis; polypeptide chain elongation. In terms of biological role, involved in peptide bond synthesis. Stimulates efficient translation and peptide-bond synthesis on native or reconstituted 70S ribosomes in vitro. Probably functions indirectly by altering the affinity of the ribosome for aminoacyl-tRNA, thus increasing their reactivity as acceptors for peptidyl transferase. The chain is Elongation factor P from Parasynechococcus marenigrum (strain WH8102).